Consider the following 134-residue polypeptide: Large ribosomal subunit protein uL16c (134 aa).

Belongs to the universal ribosomal protein uL16 family. As to quaternary structure, part of the 50S ribosomal subunit.

The protein resides in the plastid. Its subcellular location is the chloroplast. The polypeptide is Large ribosomal subunit protein uL16c (Gnetum parvifolium (Small-leaved jointfir)).